The chain runs to 398 residues: Alpha-2,8-sialyltransferase 8F (398 aa).

Topologically, residues 1-3 are cytoplasmic; sequence MRS. Residues 4–24 form a helical; Signal-anchor for type II membrane protein membrane-spanning segment; that stretch reads GGTLFALIGSLMLLLLLRMLW. Residues 25-398 are Lumenal-facing; that stretch reads CPADAPARSR…KLQFSKCETA (374 aa). 4 N-linked (GlcNAc...) asparagine glycosylation sites follow: asparagine 66, asparagine 93, asparagine 151, and asparagine 196. Disulfide bonds link cysteine 186/cysteine 335 and cysteine 200/cysteine 395. Substrate contacts are provided by residues asparagine 214, 236–238, and 322–324; these read NPS and STG. The Proton donor/acceptor role is filled by histidine 370.

Belongs to the glycosyltransferase 29 family. In terms of tissue distribution, highly expressed in kidney and expressed and all tissues tested.

The protein localises to the golgi apparatus membrane. It catalyses the reaction a ganglioside GM3 + CMP-N-acetyl-beta-neuraminate = a ganglioside GD3 + CMP + H(+). The enzyme catalyses a ganglioside GM3 (d18:1(4E)) + CMP-N-acetyl-beta-neuraminate = a ganglioside GD3 (d18:1(4E)) + CMP + H(+). The catalysed reaction is a ganglioside GD1a (d18:1(4E)) + CMP-N-acetyl-beta-neuraminate = a ganglioside GT1a (d18:1(4E)) + CMP + H(+). It carries out the reaction a ganglioside GD1a + CMP-N-acetyl-beta-neuraminate = a ganglioside GT1a + CMP + H(+). It catalyses the reaction a ganglioside GM1b (d18:1(4E)) + CMP-N-acetyl-beta-neuraminate = a ganglioside GD1c (d18:1(4E)) + CMP + H(+). The enzyme catalyses a ganglioside GM1b + CMP-N-acetyl-beta-neuraminate = a ganglioside GD1c + CMP + H(+). The catalysed reaction is a ganglioside GM4 (d18:1(4E)) + CMP-N-acetyl-beta-neuraminate = an N-acetyl-alpha-neuraminosyl-(2-&gt;8)-N-acetyl-alpha-neuraminosyl-(2-&gt;3)-beta-D-galactosyl-(1&lt;-&gt;1')-N-acylsphing-4-enine + CMP + H(+). It carries out the reaction N-acetyl-alpha-neuraminosyl-(2-&gt;3)-beta-D-galactosyl-(1&lt;-&gt;1')-ceramide + CMP-N-acetyl-beta-neuraminate = N-acetyl-alpha-neuraminosyl-(2-&gt;8)-N-acetyl-alpha-neuraminosyl-(2-&gt;3)-beta-D-galactosyl-(1&lt;-&gt;1')-ceramide + CMP + H(+). It catalyses the reaction a ganglioside GT1b (d18:1(4E)) + CMP-N-acetyl-beta-neuraminate = a ganglioside GQ1b (d18:1(4E)) + CMP + H(+). The enzyme catalyses a ganglioside GT1b + CMP-N-acetyl-beta-neuraminate = a ganglioside GQ1b + CMP + H(+). Its pathway is protein modification; protein glycosylation. Alpha-2,8-sialyltransferase that prefers O-glycans to N-glycans or glycolipids as acceptor substrates. The minimal acceptor substrate is the NeuAc-alpha-2,3(6)-Gal sequence at the non-reducing end of their carbohydrate groups. This is Alpha-2,8-sialyltransferase 8F from Mus musculus (Mouse).